We begin with the raw amino-acid sequence, 264 residues long: uncharacterized protein (264 aa).

A disordered region spans residues 1 to 20; that stretch reads MENIEKKCQPETINEDNNDE.

This sequence belongs to the mimivirus R73/L269/L862 family.

This is an uncharacterized protein from Acanthamoeba polyphaga mimivirus (APMV).